A 75-amino-acid chain; its full sequence is Small ribosomal subunit protein eS17 (75 aa).

Belongs to the eukaryotic ribosomal protein eS17 family.

This is Small ribosomal subunit protein eS17 from Thermoplasma acidophilum (strain ATCC 25905 / DSM 1728 / JCM 9062 / NBRC 15155 / AMRC-C165).